The primary structure comprises 432 residues: Serine/threonine-protein kinase Sgk1 (432 aa).

Residues proline 67–histidine 93 are disordered. Residues glutamine 82–proline 92 show a composition bias toward polar residues. The Protein kinase domain maps to phenylalanine 99–phenylalanine 356. Residues isoleucine 105–valine 113 and lysine 128 contribute to the ATP site. Aspartate 223 serves as the catalytic Proton acceptor. The 76-residue stretch at serine 357–leucine 432 folds into the AGC-kinase C-terminal domain.

The protein belongs to the protein kinase superfamily. AGC Ser/Thr protein kinase family.

Its subcellular location is the cytoplasm. It localises to the nucleus. The protein localises to the endoplasmic reticulum. The catalysed reaction is L-seryl-[protein] + ATP = O-phospho-L-seryl-[protein] + ADP + H(+). It catalyses the reaction L-threonyl-[protein] + ATP = O-phospho-L-threonyl-[protein] + ADP + H(+). Protein kinase that may play an important role in cellular stress response. May be involved in the regulation of processes such as cell survival, neuronal excitability and renal sodium excretion. In Gallus gallus (Chicken), this protein is Serine/threonine-protein kinase Sgk1 (SGK1).